The sequence spans 2440 residues: Nuclear receptor corepressor 1 (2440 aa).

Over residues 1-18 (MSSSGYPPNQGAFSTEQS) the composition is skewed to polar residues. Disordered regions lie at residues 1 to 177 (MSSS…SKLS) and 206 to 231 (QQQLEEEAAKPPEPEKPVSPPPVEQK). Residues 1-373 (MSSSGYPPNQ…QRGAGLSATI (373 aa)) form an interaction with ZBTB33 and HEXIM1 region. The segment covering 51-64 (SQASQLLQQQQQQQ) has biased composition (low complexity). 3 stretches are compositionally biased toward basic and acidic residues: residues 77–88 (PGSDRPQERRTS), 99–119 (VDHDSLESKRPRLEQVSDSHF), and 141–155 (ADAKKDPAFGGKHEA). Ser-172 carries the post-translational modification Phosphoserine. Residues 174–216 (SKLSKEELIQSMDRVDREIAKVEQQILKLKKKQQQLEEEAAKP) are a coiled coil. A compositionally biased stretch (basic and acidic residues) spans 212-221 (EAAKPPEPEK). At Ser-224 the chain carries Phosphoserine. Residues 254 to 312 (FEGLGPKVELPLYNQPSDTKVYHENIKTNQVMRKKLILFFKRRNHARKQREQKICQRYD) form an interaction with SIN3A/B region. The stretch at 299–328 (ARKQREQKICQRYDQLMEAWEKKVDRIENN) forms a coiled coil. Positions 435-486 (QFMNVWTDHEKEIFKDKFIQHPKNFGLIASYLERKSVPDCVLYYYLTKKNEN) constitute an SANT 1 domain. 2 disordered regions span residues 497 to 632 (KRRG…TEEE) and 677 to 915 (NLLQ…GSIL). Positions 501-557 (RNQQIARPSQEEKVEEKEEDKAEKTEKKEEEKKDEEEKDEKEDSKENTKEKDKIDGT) form a coiled coil. 2 stretches are compositionally biased toward basic and acidic residues: residues 509-531 (SQEEKVEEKEEDKAEKTEKKEEE) and 541-556 (KEDSKENTKEKDKIDG). A compositionally biased stretch (low complexity) spans 592 to 605 (EAAAASAAAAAATE). The span at 606 to 617 (EPPPPLPPPPEP) shows a compositional bias: pro residues. Residues 623–674 (VETSRWTEEEMEVAKKGLVEHGRNWAAIAKMVGTKSEAQCKNFYFNYKRRHN) enclose the SANT 2 domain. The segment covering 698–708 (QCESVASTVSA) has biased composition (polar residues). A compositionally biased stretch (acidic residues) spans 709 to 728 (QEDEDIEASNEEENPEDSEV). The span at 752 to 768 (ELEPTTETAPSTSPSLA) shows a compositional bias: low complexity. A compositionally biased stretch (polar residues) spans 781–792 (ETQVNDSISAET). The span at 820–859 (DSVDVEVRVPENHASKVEGDNTKERDLDRASEKVEPRDED) shows a compositional bias: basic and acidic residues. Composition is skewed to polar residues over residues 864–883 (QQINAQRPEPQSDNDSSATC) and 906–915 (SLLNPTGSIL). Residues 988 to 1816 (RSSTSPCGTS…QGLPASRYNT (829 aa)) form an interaction with ETO region. At Ser-999 the chain carries Phosphoserine. Positions 1022–1046 (VRLPTTRPTRPPPPLIPSSKTTVAS) are disordered. Lys-1106 is covalently cross-linked (Glycyl lysine isopeptide (Lys-Gly) (interchain with G-Cter in SUMO1); alternate). Residue Lys-1106 forms a Glycyl lysine isopeptide (Lys-Gly) (interchain with G-Cter in SUMO2); alternate linkage. Ser-1111 carries the post-translational modification Phosphoserine. A Glycyl lysine isopeptide (Lys-Gly) (interchain with G-Cter in SUMO2) cross-link involves residue Lys-1184. Residues 1184–1204 (KGSISRMPIEDSSPEKGREEA) form a disordered region. A phosphoserine mark is found at Ser-1195, Ser-1196, Ser-1249, Ser-1263, Ser-1281, and Ser-1322. The residue at position 1336 (Lys-1336) is an N6-acetyllysine. Thr-1367 is modified (phosphothreonine). Lys-1389 is covalently cross-linked (Glycyl lysine isopeptide (Lys-Gly) (interchain with G-Cter in SUMO2)). Lys-1412 is covalently cross-linked (Glycyl lysine isopeptide (Lys-Gly) (interchain with G-Cter in SUMO2); alternate). Lys-1412 is modified (N6-acetyllysine; alternate). The tract at residues 1440-1459 (AGETVRSRHTSVVSSGPSVL) is disordered. Phosphoserine occurs at positions 1450 and 1472. Positions 1488 to 1512 (YQNTMSRGSPMMNRTSDVTISSNKS) are enriched in polar residues. Residues 1488-1554 (YQNTMSRGSP…SPFDPHHRGS (67 aa)) are disordered. The interval 1501–2440 (RTSDVTISSN…QYETLSDSDD (940 aa)) is interaction with C1D. Lys-1518 participates in a covalent cross-link: Glycyl lysine isopeptide (Lys-Gly) (interchain with G-Cter in SUMO2). Ser-1592 is modified (phosphoserine). Disordered stretches follow at residues 1690 to 1759 (PRPY…SPSP) and 1884 to 1922 (SSAFPSGKPQPHSSVVYSEAGKDKGPPPKSRYEEELRTR). Composition is skewed to basic and acidic residues over residues 1712 to 1729 (AEREREREREKERERERI) and 1903 to 1921 (AGKDKGPPPKSRYEEELRT). The CORNR box 1 motif lies at 1933–1937 (IDVII). A disordered region spans residues 1943–1969 (SDKDARERGSQSSDSSSSLSSHRYETP). A compositionally biased stretch (low complexity) spans 1952 to 1963 (SQSSDSSSSLSS). Residues Ser-1977 and Ser-1981 each carry the phosphoserine modification. The tract at residues 2006–2041 (PTRQYEGPLHHYRPQQESPSPQQQLPPSSQAEGMGQ) is disordered. A compositionally biased stretch (low complexity) spans 2020 to 2035 (QQESPSPQQQLPPSSQ). Residues 2032–2115 (PSSQAEGMGQ…QAQSVHHQRP (84 aa)) are ID1. The segment at 2047 to 2050 (RLIT) is required for interaction with RARA in the absence of its ligand. Positions 2055-2059 (ICQII) match the CORNR box 2 motif. Over residues 2067-2086 (QVSSQTPQQPPTSTFQNSPS) the composition is skewed to low complexity. Positions 2067-2155 (QVSSQTPQQP…PYEPISPPQV (89 aa)) are disordered. Over residues 2087 to 2110 (ALVSTPVRTKTSNRYSPESQAQSV) the composition is skewed to polar residues. 5 positions are modified to phosphoserine: Ser-2102, Ser-2120, Ser-2136, Ser-2151, and Ser-2184. Residues 2124-2142 (LVDKSRGSRPGKSPERSHV) are compositionally biased toward basic and acidic residues. Residues 2212-2273 (IFRKLNSSGG…EDIIRKALMG (62 aa)) form an ID2 region. The short motif at 2263–2267 (LEDII) is the CORNR box 3 element. A disordered region spans residues 2287 to 2440 (SQPMGVVPGT…QYETLSDSDD (154 aa)). The span at 2296 to 2305 (TANTSVVTSG) shows a compositional bias: polar residues. Phosphothreonine is present on Thr-2399. Composition is skewed to polar residues over residues 2407 to 2418 (AVNQAAPHQQNR) and 2431 to 2440 (QYETLSDSDD). Ser-2436 and Ser-2438 each carry phosphoserine.

Belongs to the N-CoR nuclear receptor corepressors family. In terms of assembly, forms a large corepressor complex that contains SIN3A/B and histone deacetylases HDAC1 and HDAC2. This complex associates with the thyroid receptor (TR) and the retinoid acid receptor (RAR) in the absence of ligand. Interacts directly with RARA; the interaction is facilitated with RARA trimethylation. Component of the N-Cor repressor complex, at least composed of CBFA2T3, HEXIM1, NCOR1, NCOR2, HDAC3, TBL1X, TBL1XR1, CORO2A and GPS2. Interacts with ZBTB33; the interaction serves to recruit the N-CoR complex to promoter regions containing methylated CpG dinucleotides. Interacts with TRIM28 and KDM3A. Interacts (via the RD1 domain) with BAZ1A (via its N-terminal); the interaction corepresses a number of NCOR1-regulated genes. Interacts with BCL6, C1D, DACH1, HEXIM1, HDAC7, RORA, RORC, SAP30, SIAH2, SIN3A and SIN3B. May interact with DEAF1. Interacts with RXRA. Interacts with SETD5. Interacts with VDR. Interacts with ZBTB7A. Interacts with AR. Interacts with HDAC3. In terms of processing, ubiquitinated; mediated by SIAH2 and leading to its subsequent proteasomal degradation.

It localises to the nucleus. Mediates transcriptional repression by certain nuclear receptors. Part of a complex which promotes histone deacetylation and the formation of repressive chromatin structures which may impede the access of basal transcription factors. Participates in the transcriptional repressor activity produced by BCL6. Recruited by ZBTB7A to the androgen response elements/ARE on target genes, negatively regulates androgen receptor signaling and androgen-induced cell proliferation. Mediates the NR1D1-dependent repression and circadian regulation of TSHB expression. The NCOR1-HDAC3 complex regulates the circadian expression of the core clock gene ARTNL/BMAL1 and the genes involved in lipid metabolism in the liver. The polypeptide is Nuclear receptor corepressor 1 (NCOR1) (Homo sapiens (Human)).